Consider the following 339-residue polypeptide: N-acetyl-gamma-glutamyl-phosphate reductase (339 aa).

C145 is an active-site residue.

This sequence belongs to the NAGSA dehydrogenase family. Type 1 subfamily.

It localises to the cytoplasm. The catalysed reaction is N-acetyl-L-glutamate 5-semialdehyde + phosphate + NADP(+) = N-acetyl-L-glutamyl 5-phosphate + NADPH + H(+). It functions in the pathway amino-acid biosynthesis; L-arginine biosynthesis; N(2)-acetyl-L-ornithine from L-glutamate: step 3/4. Functionally, catalyzes the NADPH-dependent reduction of N-acetyl-5-glutamyl phosphate to yield N-acetyl-L-glutamate 5-semialdehyde. The protein is N-acetyl-gamma-glutamyl-phosphate reductase of Kosmotoga olearia (strain ATCC BAA-1733 / DSM 21960 / TBF 19.5.1).